The sequence spans 536 residues: Prolyl 3-hydroxylase sudestada1 (536 aa).

The disordered stretch occupies residues 1-35 (METSSSSPVKPRRKDKDEDGRAEQEDSADQVGEPH). The segment covering 14-24 (KDKDEDGRAEQ) has biased composition (basic and acidic residues). Positions 165–275 (KLDYVSASCS…RLTINGWFHG (111 aa)) constitute a Fe2OG dioxygenase domain. Positions 185 and 187 each coordinate Fe cation. Y199 is a binding site for 2-oxoglutarate. H254 serves as a coordination point for Fe cation. R266 lines the 2-oxoglutarate pocket. Residues 467–486 (PTAKAPTDGRRSDYDDEEED) form a disordered region.

This sequence belongs to the TPA1 family. In terms of assembly, monomer. Fe(2+) serves as cofactor. L-ascorbate is required as a cofactor. As to expression, in third-instar larval tissues,highly expressed in the fat body, with significant expression in other organs including the brain, salivary glands, imaginal disks and gut.

It is found in the nucleus. The protein localises to the cytoplasm. It catalyses the reaction [ribosomal protein uS12]-L-proline + 2-oxoglutarate + O2 = [ribosomal protein uS12]-(3S)-3-hydroxy-L-proline + succinate + CO2. In terms of biological role, prolyl 3-hydroxylase that catalyzes 3-hydroxylation of 'Pro-62' of small ribosomal subunit uS12 (RpS23), thereby regulating protein translation termination efficiency. The polypeptide is Prolyl 3-hydroxylase sudestada1 (sud1) (Drosophila melanogaster (Fruit fly)).